The sequence spans 89 residues: Small ribosomal subunit protein uS15 (89 aa).

Basic and acidic residues predominate over residues 1 to 21 (MSVDAETKTKIIKDNARDKND). Residues 1–26 (MSVDAETKTKIIKDNARDKNDTGSPE) are disordered.

The protein belongs to the universal ribosomal protein uS15 family. In terms of assembly, part of the 30S ribosomal subunit. Forms a bridge to the 50S subunit in the 70S ribosome, contacting the 23S rRNA.

In terms of biological role, one of the primary rRNA binding proteins, it binds directly to 16S rRNA where it helps nucleate assembly of the platform of the 30S subunit by binding and bridging several RNA helices of the 16S rRNA. Its function is as follows. Forms an intersubunit bridge (bridge B4) with the 23S rRNA of the 50S subunit in the ribosome. The polypeptide is Small ribosomal subunit protein uS15 (Erythrobacter litoralis (strain HTCC2594)).